We begin with the raw amino-acid sequence, 370 residues long: D-alanine--D-alanine ligase (370 aa).

The 209-residue stretch at 144-352 (KKIFADAGIP…YGALIERLVD (209 aa)) folds into the ATP-grasp domain. 177–232 (EEVLTYPVFVKPANLGSSVGISKATNKKELADAMTEAFLYDRRVVVEQGVVAREIE) contacts ATP. Mg(2+)-binding residues include aspartate 306, glutamate 319, and asparagine 321.

This sequence belongs to the D-alanine--D-alanine ligase family. Mg(2+) is required as a cofactor. Requires Mn(2+) as cofactor.

It localises to the cytoplasm. It carries out the reaction 2 D-alanine + ATP = D-alanyl-D-alanine + ADP + phosphate + H(+). The protein operates within cell wall biogenesis; peptidoglycan biosynthesis. Cell wall formation. In Listeria monocytogenes serotype 4b (strain F2365), this protein is D-alanine--D-alanine ligase.